The following is a 308-amino-acid chain: Acetylglutamate kinase (308 aa).

Substrate is bound by residues 86-87, arginine 108, and asparagine 201; that span reads GG.

Belongs to the acetylglutamate kinase family. ArgB subfamily.

It localises to the cytoplasm. The enzyme catalyses N-acetyl-L-glutamate + ATP = N-acetyl-L-glutamyl 5-phosphate + ADP. It participates in amino-acid biosynthesis; L-arginine biosynthesis; N(2)-acetyl-L-ornithine from L-glutamate: step 2/4. Functionally, catalyzes the ATP-dependent phosphorylation of N-acetyl-L-glutamate. The polypeptide is Acetylglutamate kinase (Prochlorococcus marinus (strain MIT 9303)).